The chain runs to 44 residues: Large ribosomal subunit protein bL34 (44 aa).

Composition is skewed to basic residues over residues 1 to 14 (MKRT…KRQK) and 31 to 44 (LSAR…RLAV). A disordered region spans residues 1 to 44 (MKRTLGGTTRKRQKTSGFRARMRTASGRRVLSARRRRGRHRLAV).

It belongs to the bacterial ribosomal protein bL34 family.

In Gloeobacter violaceus (strain ATCC 29082 / PCC 7421), this protein is Large ribosomal subunit protein bL34.